The primary structure comprises 363 residues: G-protein coupled receptor 4 (363 aa).

At 1–8 the chain is on the extracellular side; sequence MGNGTWEG. Asparagine 3 carries N-linked (GlcNAc...) asparagine glycosylation. A helical transmembrane segment spans residues 9–45; it reads CHVDSRVDHLFPPSLYIFVIGVGLPTNCLALWAAYRQ. Cystine bridges form between cysteine 9–cysteine 258 and cysteine 90–cysteine 168. The Cytoplasmic segment spans residues 46–49; sequence VRQR. Residues 50–80 form a helical membrane-spanning segment; sequence NELGVYLMNLSIADLLYICTLPLWVDYFLHH. The Extracellular segment spans residues 81 to 85; that stretch reads DNWIH. The helical transmembrane segment at 86 to 121 threads the bilayer; the sequence is GPGSCKLFGFIFYTNIYISIAFLCCISVDRYLAVAH. The Cytoplasmic portion of the chain corresponds to 122 to 129; that stretch reads PLRFARLR. Residues 130 to 156 form a helical membrane-spanning segment; it reads RVKTAVAVSSVVWATELGANSVPLFHD. At 157 to 172 the chain is on the extracellular side; the sequence is ELFRDRYNHTFCFEKF. Positions 157 to 172 are extracellular loop 2 (ECL2); the sequence is ELFRDRYNHTFCFEKF. N-linked (GlcNAc...) asparagine glycosylation is present at asparagine 164. A helical membrane pass occupies residues 173–210; that stretch reads PMEGWVAWMNLYRVFVGFLFPWALMLLSYRGILRAVRG. The Cytoplasmic portion of the chain corresponds to 211–214; sequence SVST. Residues 215–250 traverse the membrane as a helical segment; it reads ERQEKAKIKRLALSLIAIVLVCFAPYHVLLLSRSAV. Topologically, residues 251 to 260 are extracellular; sequence YLGHPWDCGF. Residues 261–289 traverse the membrane as a helical segment; that stretch reads EERVFSAYHSSLAFTSLNCVADPILYCLV. At 290–363 the chain is on the cytoplasmic side; it reads NEGARSDVAK…QLKMLPPPAP (74 aa). The interval 344 to 363 is disordered; that stretch reads ASPPSQGDQVQLKMLPPPAP.

This sequence belongs to the G-protein coupled receptor 1 family.

The protein localises to the cell membrane. Its activity is regulated as follows. Activated by a network of residues that connects an extracellular-facing cavity to Glu-145, a conserved charged residue buried in the transmembrane core of the receptor. Protonation likely drives conformational changes in extracellular loop 2 (ECL2), which stabilizes movement of transmembrane 3 (TM3) and a series of rearrangements that connect the extracellular-facing cavity to Glu-145, a residue only conserved in proton-sensing G-protein coupled receptors. Proton-sensing G-protein coupled receptor activated by extracellular pH, which is required to monitor pH changes and generate adaptive reactions. Activated by an optimal pH of 6.8-7.2. Ligand binding causes a conformation change that triggers signaling via guanine nucleotide-binding proteins (G proteins) and modulates the activity of downstream effectors, such as adenylate cyclase. GPR4 is mainly coupled to G(s) G proteins and mediates activation of adenylate cyclase activity. May also couple with G(q) and G(12)/G(13) G proteins. Acts as a key regulator of respiratory sensitivity to CO2/H(+) in brain retrotrapezoid nucleus neurons: acts by mediating detection of protons generated by the formation of carbonic acid in the blood, an important mechanism to impulse to breathe. Also acts as a regulator of acid secretion in the kidney collecting duct by maintaining acid-base homeostasis in the kidney. Acidosis-induced GPR4 activation increases paracellular gap formation and permeability of vascular endothelial cells, possibly through the G(12)/G(13)/Rho GTPase signaling pathway. The sequence is that of G-protein coupled receptor 4 (GPR4) from Sus scrofa (Pig).